A 284-amino-acid chain; its full sequence is Tropomyosin-2 (284 aa).

Residues 1–284 (MDAIKKKMQA…DQTFAELTGY (284 aa)) adopt a coiled-coil conformation. Positions 82–110 (ESEVATQNRKVQQIEEDLEKSEERSTTAQ) are disordered.

It belongs to the tropomyosin family. As to quaternary structure, homodimer.

Tropomyosin, in association with the troponin complex, plays a central role in the calcium dependent regulation of muscle contraction. May also regulate motor systems required to maintain nuclear integrity and apico-basal polarity during embryogenesis. In Drosophila melanogaster (Fruit fly), this protein is Tropomyosin-2 (Tm2).